A 405-amino-acid polypeptide reads, in one-letter code: uncharacterized protein (405 aa).

The next 12 membrane-spanning stretches (helical) occupy residues 19 to 39, 47 to 67, 85 to 105, 107 to 127, 156 to 176, 178 to 198, 224 to 244, 252 to 272, 283 to 303, 309 to 329, 344 to 364, and 366 to 386; these read IVSI…PLAV, VMGF…FATL, IVVF…TAGL, ASLP…LGIG, GIVT…FYHW, GLQA…LLAI, GMAL…ITLF, GAAF…LLFP, VAMI…VATM, IGVL…GVVA, TYTV…GLVM, and WAGV…ALLL.

Belongs to the major facilitator superfamily. YhhS family.

The protein localises to the cell inner membrane. This is an uncharacterized protein from Shigella flexneri.